A 181-amino-acid polypeptide reads, in one-letter code: ATP synthase subunit delta (181 aa).

The protein belongs to the ATPase delta chain family. As to quaternary structure, F-type ATPases have 2 components, F(1) - the catalytic core - and F(0) - the membrane proton channel. F(1) has five subunits: alpha(3), beta(3), gamma(1), delta(1), epsilon(1). F(0) has three main subunits: a(1), b(2) and c(10-14). The alpha and beta chains form an alternating ring which encloses part of the gamma chain. F(1) is attached to F(0) by a central stalk formed by the gamma and epsilon chains, while a peripheral stalk is formed by the delta and b chains.

Its subcellular location is the cell inner membrane. F(1)F(0) ATP synthase produces ATP from ADP in the presence of a proton or sodium gradient. F-type ATPases consist of two structural domains, F(1) containing the extramembraneous catalytic core and F(0) containing the membrane proton channel, linked together by a central stalk and a peripheral stalk. During catalysis, ATP synthesis in the catalytic domain of F(1) is coupled via a rotary mechanism of the central stalk subunits to proton translocation. In terms of biological role, this protein is part of the stalk that links CF(0) to CF(1). It either transmits conformational changes from CF(0) to CF(1) or is implicated in proton conduction. In Chlorobaculum parvum (strain DSM 263 / NCIMB 8327) (Chlorobium vibrioforme subsp. thiosulfatophilum), this protein is ATP synthase subunit delta.